The chain runs to 268 residues: MNQMNPAFVMPDVQSTVDTRQIPIQRVGVKAVRHPLTVRTPDGSAQPTVGTWNLDVHLPAEVKGTHMSRFVALLEENKAPLDSSAFRALLTSMLEKLEAPAGRIEVSFPYFVNKTAPVSGVQSLLDYEVSLMGDSRDGATRLFLKVLVPVTSLCPCSKKISQYGAHNQRSHVTINAELIDDVPVEDLIRIAEEEASCELWGLLKRPDEKFVTERAYENPKFVEDLVRDVAQRLNDDHRIVAYVLEAENFESIHNHSAYAVIESDKRLR.

This sequence belongs to the GTP cyclohydrolase IV family.

The enzyme catalyses GTP + H2O = 7,8-dihydroneopterin 3'-triphosphate + formate + H(+). The protein operates within cofactor biosynthesis; 7,8-dihydroneopterin triphosphate biosynthesis; 7,8-dihydroneopterin triphosphate from GTP: step 1/1. Functionally, converts GTP to 7,8-dihydroneopterin triphosphate. This chain is GTP cyclohydrolase FolE2, found in Paraburkholderia phymatum (strain DSM 17167 / CIP 108236 / LMG 21445 / STM815) (Burkholderia phymatum).